Here is a 248-residue protein sequence, read N- to C-terminus: ATP synthase subunit a, chloroplastic (248 aa).

The next 5 helical transmembrane spans lie at 39–59 (QVLITSWVVIAILLGSSILAV), 96–116 (VPFIGTLFLFIFVSNWSGALF), 135–155 (INTTVALALLTSVAYFYAGLT), 200–220 (LVVVVLLSLVPLVVPIPVMFL), and 221–241 (GLFTSGIQALIFATLAAAYIG).

This sequence belongs to the ATPase A chain family. F-type ATPases have 2 components, CF(1) - the catalytic core - and CF(0) - the membrane proton channel. CF(1) has five subunits: alpha(3), beta(3), gamma(1), delta(1), epsilon(1). CF(0) has four main subunits: a, b, b' and c.

It localises to the plastid. Its subcellular location is the chloroplast thylakoid membrane. In terms of biological role, key component of the proton channel; it plays a direct role in the translocation of protons across the membrane. In Pelargonium hortorum (Common geranium), this protein is ATP synthase subunit a, chloroplastic.